The following is a 400-amino-acid chain: MSDINFMVVDGSLADLVAELTAYIETLGCDELEANCQRALAAGEEPKVFELITQQLPLLNKSSEQQFESVWQLCLHVFSFSESFEWVDAVLKAISGHSNLPRSFNGPAAAGQAVVAVLASLFNMLSSSHDDAQLANTLLAALTTAEETGNLHLLAGQLKSDQTVTWINTWQIEADVRDQLIAKIYSALVQLDEPAKALALLVAAVGNTQTSTFPMTCKLVQQALKSDHVYDFGSILALEPVEDLKTTEQRLFELLTTVASGEVAKMQSLAAGDAKSLIEENDFDAESLLAKTRVIALANLAAESPEIEYSIIAKNLDVSLDTVELWVIDTIRAGLVEGRLSQTKQSFAVHRAQKSGPIAKADWEVISQKLDVWKKSINDVLHVVKQARENANAQKRKIAA.

In terms of domain architecture, PCI spans 180-354; that stretch reads LIAKIYSALV…QSFAVHRAQK (175 aa).

This sequence belongs to the eIF-3 subunit M family. In terms of assembly, component of the eukaryotic translation initiation factor 3 (eIF-3) complex.

It localises to the cytoplasm. Its function is as follows. Component of the eukaryotic translation initiation factor 3 (eIF-3) complex, which is involved in protein synthesis of a specialized repertoire of mRNAs and, together with other initiation factors, stimulates binding of mRNA and methionyl-tRNAi to the 40S ribosome. The eIF-3 complex specifically targets and initiates translation of a subset of mRNAs involved in cell proliferation. The chain is Eukaryotic translation initiation factor 3 subunit M from Yarrowia lipolytica (strain CLIB 122 / E 150) (Yeast).